The following is a 383-amino-acid chain: S-adenosylmethionine:tRNA ribosyltransferase-isomerase (383 aa).

The protein belongs to the QueA family. As to quaternary structure, monomer.

Its subcellular location is the cytoplasm. It carries out the reaction 7-aminomethyl-7-carbaguanosine(34) in tRNA + S-adenosyl-L-methionine = epoxyqueuosine(34) in tRNA + adenine + L-methionine + 2 H(+). The protein operates within tRNA modification; tRNA-queuosine biosynthesis. Functionally, transfers and isomerizes the ribose moiety from AdoMet to the 7-aminomethyl group of 7-deazaguanine (preQ1-tRNA) to give epoxyqueuosine (oQ-tRNA). The protein is S-adenosylmethionine:tRNA ribosyltransferase-isomerase of Rickettsia prowazekii (strain Madrid E).